The sequence spans 233 residues: Hydroxyacylglutathione hydrolase (233 aa).

The Zn(2+) site is built by histidine 52, histidine 54, aspartate 56, histidine 57, histidine 108, aspartate 125, and histidine 163.

Belongs to the metallo-beta-lactamase superfamily. Glyoxalase II family. As to quaternary structure, monomer. Requires Zn(2+) as cofactor.

The catalysed reaction is an S-(2-hydroxyacyl)glutathione + H2O = a 2-hydroxy carboxylate + glutathione + H(+). It participates in secondary metabolite metabolism; methylglyoxal degradation; (R)-lactate from methylglyoxal: step 2/2. Functionally, thiolesterase that catalyzes the hydrolysis of S-D-lactoyl-glutathione to form glutathione and D-lactic acid. This chain is Hydroxyacylglutathione hydrolase, found in Histophilus somni (strain 129Pt) (Haemophilus somnus).